The sequence spans 666 residues: Frizzled-3 (666 aa).

Residues 1–22 (MAVSWIVFDLWLLTVFLGQIGG) form the signal peptide. An FZ domain is found at 23-136 (HSLFSCEPIT…CSRFPDCDEP (114 aa)). Residues 23–205 (HSLFSCEPIT…REELSFARYF (183 aa)) lie on the Extracellular side of the membrane. 5 disulfides stabilise this stretch: Cys-28–Cys-89, Cys-36–Cys-82, Cys-73–Cys-110, Cys-99–Cys-133, and Cys-103–Cys-127. Asn-42 carries N-linked (GlcNAc...) asparagine glycosylation. The chain crosses the membrane as a helical span at residues 206–226 (IGLISIICLSATLFTFLTFLI). The Cytoplasmic portion of the chain corresponds to 227–237 (DVTRFRYPERP). The chain crosses the membrane as a helical span at residues 238-258 (IIFYAVCYMMVSLIFFIGFLL). The Extracellular segment spans residues 259-288 (EDRVACNASSPAQYKASTVTQGSHNKACTM). An N-linked (GlcNAc...) asparagine glycan is attached at Asn-265. A helical membrane pass occupies residues 289 to 309 (LFMVLYFFTMAGSVWWVILTI). Over 310–328 (TWFLAAVPKWGSEAIEKKA) the chain is Cytoplasmic. The chain crosses the membrane as a helical span at residues 329–349 (LLFHASAWGIPGTLTIILLAM). Residues 350 to 374 (NKIEGDNISGVCFVGLYDVDALRYF) lie on the Extracellular side of the membrane. A glycan (N-linked (GlcNAc...) asparagine) is linked at Asn-356. A helical transmembrane segment spans residues 375–395 (VLAPLCLYVVVGVSLLLAGII). At 396–420 (SLNRVRIEIPLEKENQDKLVKFMIR) the chain is on the cytoplasmic side. A helical transmembrane segment spans residues 421–441 (IGVFSILYLVPLLVVIGCYFY). The Extracellular segment spans residues 442–477 (EQAYRGIWETTWIQERCREYHIPCPYQVTQMSRPDL). The chain crosses the membrane as a helical span at residues 478-498 (ILFLMKYLMALIVGIPSIFWV). At 499 to 666 (GSKKTCFEWA…RVIEEDGTSA (168 aa)) the chain is on the cytoplasmic side. Residues 502–507 (KTCFEW) carry the Lys-Thr-X-X-X-Trp motif, mediates interaction with the PDZ domain of Dvl family members motif. The tract at residues 538 to 666 (RDPNTPIIRK…RVIEEDGTSA (129 aa)) is disordered. Positions 550–565 (GTSTQGTSTHASSTQL) are enriched in polar residues. Residues 617-638 (LTDHSRHSSSHRLNEQSRHSSI) are compositionally biased toward basic and acidic residues. Residues 639–656 (RDLSNNPMTHITHGTSMN) are compositionally biased toward polar residues.

Belongs to the G-protein coupled receptor Fz/Smo family. In terms of assembly, interacts with VANGL2. Ubiquitinated by ZNRF3, leading to its degradation by the proteasome. Expressed in the cortex, diencephalon, rostral brainstem and little or no staining is seen in the striatum or cerebellum. Expressed in both hair cells and supporting cells in the utricle, saccule, cristae and the organ of Corti in the inner ear (at protein level). Highly expressed in the CNS. In skin, it is restricted to the epidermis and to the developing hair follicle.

The protein localises to the membrane. Its subcellular location is the cell membrane. It is found in the cell surface. The protein resides in the apical cell membrane. Receptor for Wnt proteins. Most of frizzled receptors are coupled to the beta-catenin canonical signaling pathway, which leads to the activation of disheveled proteins, inhibition of GSK-3 kinase, nuclear accumulation of beta-catenin and activation of Wnt target genes. A second signaling pathway involving PKC and calcium fluxes has been seen for some family members, but it is not yet clear if it represents a distinct pathway or if it can be integrated in the canonical pathway, as PKC seems to be required for Wnt-mediated inactivation of GSK-3 kinase. Both pathways seem to involve interactions with G-proteins. Activation by Wnt5A stimulates PKC activity via a G-protein-dependent mechanism. Involved in transduction and intercellular transmission of polarity information during tissue morphogenesis and/or in differentiated tissues. Plays a role in controlling early axon growth and guidance processes necessary for the formation of a subset of central and peripheral major fiber tracts. Required for the development of major fiber tracts in the central nervous system, including: the anterior commissure, the corpus callosum, the thalamocortical, corticothalamic and nigrostriatal tracts, the corticospinal tract, the fasciculus retroflexus, the mammillothalamic tract, the medial lemniscus, and ascending fiber tracts from the spinal cord to the brain. In the peripheral nervous system, controls axon growth in distinct populations of cranial and spinal motor neurons, including the facial branchimotor nerve, the hypoglossal nerve, the phrenic nerve, and motor nerves innervating dorsal limbs. Involved in the migration of cranial neural crest cells. May also be implicated in the transmission of sensory information from the trunk and limbs to the brain. Controls commissural sensory axons guidance after midline crossing along the anterior-posterior axis in the developing spinal cord in a Wnt-dependent signaling pathway. Together with FZD6, is involved in the neural tube closure and plays a role in the regulation of the establishment of planar cell polarity (PCP), particularly in the orientation of asymmetric bundles of stereocilia on the apical faces of a subset of auditory and vestibular sensory cells located in the inner ear. Promotes neurogenesis by maintaining sympathetic neuroblasts within the cell cycle in a beta-catenin-dependent manner. This is Frizzled-3 (Fzd3) from Mus musculus (Mouse).